The chain runs to 360 residues: UDP-3-O-acylglucosamine N-acyltransferase (360 aa).

The active-site Proton acceptor is His256. Residues 341–360 (EGSGAETAARPDDDRDEGRG) form a disordered region. Over residues 349–360 (ARPDDDRDEGRG) the composition is skewed to basic and acidic residues.

Belongs to the transferase hexapeptide repeat family. LpxD subfamily. Homotrimer.

The catalysed reaction is a UDP-3-O-[(3R)-3-hydroxyacyl]-alpha-D-glucosamine + a (3R)-hydroxyacyl-[ACP] = a UDP-2-N,3-O-bis[(3R)-3-hydroxyacyl]-alpha-D-glucosamine + holo-[ACP] + H(+). The protein operates within bacterial outer membrane biogenesis; LPS lipid A biosynthesis. Catalyzes the N-acylation of UDP-3-O-acylglucosamine using 3-hydroxyacyl-ACP as the acyl donor. Is involved in the biosynthesis of lipid A, a phosphorylated glycolipid that anchors the lipopolysaccharide to the outer membrane of the cell. The chain is UDP-3-O-acylglucosamine N-acyltransferase from Rhodopseudomonas palustris (strain ATCC BAA-98 / CGA009).